Consider the following 311-residue polypeptide: 1,4-dihydroxy-2-naphthoate octaprenyltransferase (311 aa).

9 helical membrane-spanning segments follow: residues 31-51 (LTAS…YVKV), 53-73 (LLLF…TNLF), 104-126 (TILQ…ICAS), 131-153 (LALI…LPIA), 157-177 (FGEL…SFFI), 182-202 (INMQ…AINL), 220-240 (LAIL…FAVA), 242-262 (IWVV…VVFL), and 290-310 (TAQT…ISYF).

This sequence belongs to the MenA family. Type 1 subfamily.

It localises to the cell membrane. It carries out the reaction an all-trans-polyprenyl diphosphate + 1,4-dihydroxy-2-naphthoate + H(+) = a 2-demethylmenaquinol + CO2 + diphosphate. Its pathway is quinol/quinone metabolism; menaquinone biosynthesis; menaquinol from 1,4-dihydroxy-2-naphthoate: step 1/2. In terms of biological role, conversion of 1,4-dihydroxy-2-naphthoate (DHNA) to demethylmenaquinone (DMK). The chain is 1,4-dihydroxy-2-naphthoate octaprenyltransferase from Bacillus subtilis (strain 168).